The sequence spans 290 residues: Ribosomal RNA small subunit methyltransferase A (290 aa).

S-adenosyl-L-methionine contacts are provided by N27, L29, G54, E75, D100, and N125.

This sequence belongs to the class I-like SAM-binding methyltransferase superfamily. rRNA adenine N(6)-methyltransferase family. RsmA subfamily.

Its subcellular location is the cytoplasm. The catalysed reaction is adenosine(1518)/adenosine(1519) in 16S rRNA + 4 S-adenosyl-L-methionine = N(6)-dimethyladenosine(1518)/N(6)-dimethyladenosine(1519) in 16S rRNA + 4 S-adenosyl-L-homocysteine + 4 H(+). In terms of biological role, specifically dimethylates two adjacent adenosines (A1518 and A1519) in the loop of a conserved hairpin near the 3'-end of 16S rRNA in the 30S particle. May play a critical role in biogenesis of 30S subunits. In Streptococcus pneumoniae (strain JJA), this protein is Ribosomal RNA small subunit methyltransferase A.